An 827-amino-acid chain; its full sequence is MQDNSVNETKNIVEVGIDSSIEESYLAYSMSVIIGRALPDARDGLKPVHRRILYAMHELGLTSKVAYKKSARIVGDVIGKYHPHGDNAVYDALVRMAQDFSMRLELVDGQGNFGSIDGDNAAAMRYTEARMTKASEEILRDIDKDTIDFVPNYDDTLKEPDILPSRLPNLLVNGANGIAVGMATSIPPHRMDEIIDALVHVLENPNAGLDEILEFVKGPDFPTGGIIYGKAGIIEAYKTGRGRVKVRAKVHVEKTKNKEIIVLDEMPFQTNKAKLVEQISDLAREKQIEGISEVRDESDREGIRVVIELKRDAMSEIVLNHLYKLTTMETTFSIILLAIYNKEPKIFTLLELLHLFLNHRKTIIIRRTIFELEKAKARAHILEGYLIALDNIDEIVRLIKTSQSPEAAKNALMERFTLSEIQSKAILEMRLQRLTGLERDKIKEEYQNLLELIDDLNGILKSEDRLNGVVKTELLEVKEQFSSPRRTEIQESYENIDIEDLIANEPMVVSMSYKGYVKRVDLKAYEKQNRGGKGKLSGSTYEDDFIENFFVANTHDILLFITNKGQLYHLKVYKIPEASRIAMGKAIVNLISLAPDEKIMATLSTKDFSDERSLAFFTKNGVVKRTNLSEFESNRSCGIRAIVLDEGDELVSAKVVDKNAKHLLIASHLGIFIKFPLEEVREIGRTTRGVIGIKLNENDFVVGAVVISDDGNKLLSVSENGLGKQTLAEAYRGQSRGGKGVIGMKLTQKTGNLVGVISVDDENLDLMILTASAKMIRVSIKDIRETGRNASGVKLINTADKVMYVNSCPKEEEPENLETSSAQNLFE.

Residues 38-501 form the Topo IIA-type catalytic domain; sequence LPDARDGLKP…SYENIDIEDL (464 aa). Tyr-126 acts as the O-(5'-phospho-DNA)-tyrosine intermediate in catalysis. The GyrA-box motif lies at 528–534; that stretch reads QNRGGKG.

The protein belongs to the type II topoisomerase GyrA/ParC subunit family. Heterotetramer, composed of two GyrA and two GyrB chains. In the heterotetramer, GyrA contains the active site tyrosine that forms a transient covalent intermediate with DNA, while GyrB binds cofactors and catalyzes ATP hydrolysis.

Its subcellular location is the cytoplasm. It carries out the reaction ATP-dependent breakage, passage and rejoining of double-stranded DNA.. A type II topoisomerase that negatively supercoils closed circular double-stranded (ds) DNA in an ATP-dependent manner to modulate DNA topology and maintain chromosomes in an underwound state. Negative supercoiling favors strand separation, and DNA replication, transcription, recombination and repair, all of which involve strand separation. Also able to catalyze the interconversion of other topological isomers of dsDNA rings, including catenanes and knotted rings. Type II topoisomerases break and join 2 DNA strands simultaneously in an ATP-dependent manner. This chain is DNA gyrase subunit A, found in Helicobacter pylori (strain ATCC 700392 / 26695) (Campylobacter pylori).